Reading from the N-terminus, the 789-residue chain is Ent-kaur-16-ene synthase, chloroplastic (789 aa).

The Mg(2+) site is built by aspartate 536, aspartate 540, asparagine 680, serine 684, and glutamate 688. The DDXXD motif signature appears at 536 to 540; the sequence is DDFYD.

This sequence belongs to the terpene synthase family. Requires Mg(2+) as cofactor. The N-terminus is blocked. In terms of tissue distribution, abundant in most tissues. Present in low amounts in mature cotyledons.

The protein resides in the plastid. The protein localises to the chloroplast. It catalyses the reaction ent-copalyl diphosphate = ent-kaur-16-ene + diphosphate. The protein operates within plant hormone biosynthesis; gibberellin biosynthesis. Catalyzes the conversion of ent-copalyl diphosphate to the gibberellin precursor ent-kaur-16-ene. The chain is Ent-kaur-16-ene synthase, chloroplastic from Cucurbita maxima (Pumpkin).